Here is a 325-residue protein sequence, read N- to C-terminus: Phenylalanine--tRNA ligase alpha subunit (325 aa).

Residue Glu251 participates in Mg(2+) binding.

It belongs to the class-II aminoacyl-tRNA synthetase family. Phe-tRNA synthetase alpha subunit type 1 subfamily. As to quaternary structure, tetramer of two alpha and two beta subunits. Mg(2+) serves as cofactor.

The protein resides in the cytoplasm. It catalyses the reaction tRNA(Phe) + L-phenylalanine + ATP = L-phenylalanyl-tRNA(Phe) + AMP + diphosphate + H(+). This is Phenylalanine--tRNA ligase alpha subunit (pheS) from Thermotoga maritima (strain ATCC 43589 / DSM 3109 / JCM 10099 / NBRC 100826 / MSB8).